A 36-amino-acid polypeptide reads, in one-letter code: uncharacterized protein (36 aa).

The protein localises to the mitochondrion. This is an uncharacterized protein from Saccharomyces cerevisiae (strain ATCC 204508 / S288c) (Baker's yeast).